Here is a 182-residue protein sequence, read N- to C-terminus: Plasmolipin (182 aa).

The Cytoplasmic segment spans residues 1–35 (MAEFPSKVSTRTSSPAQGAEASVSALRPDLGFVRS). At S9 the chain carries Phosphoserine. The MARVEL domain maps to 32 to 166 (FVRSRLGALM…SAFFSYQAWR (135 aa)). A helical membrane pass occupies residues 36–56 (RLGALMLLQLVLGLLVWALIA). The Extracellular segment spans residues 57–68 (DTPYHLYPAYGW). The chain crosses the membrane as a helical span at residues 69 to 89 (VMFVAVFLWLVTIVLFNLYLF). The Cytoplasmic portion of the chain corresponds to 90–99 (QLHMKLYMVP). Residues 100–120 (WPLVLMIFNISATVLYITAFI) form a helical membrane-spanning segment. The Extracellular segment spans residues 121–141 (ACSAAVDLTSLRGTRPYNQRA). The chain crosses the membrane as a helical span at residues 142–162 (AASFFACLVMIAYGVSAFFSY). Residues 163–182 (QAWRGVGSNAATSQMAGGYA) are Cytoplasmic-facing.

It belongs to the MAL family. As to quaternary structure, forms oligomers. In terms of processing, phosphorylated.

It is found in the cell membrane. The protein resides in the myelin membrane. Its subcellular location is the apical cell membrane. The protein localises to the golgi apparatus. Main component of the myelin sheath that plays an important role in myelin membrane biogenesis and myelination. Plays an essential function in apical endocytosis. Regulates epithelial development through the regulation of apical endocytosis. Part of the intracellular machinery that mediates basolateral-to-apical transport of ICAM-1, an essential adhesion receptor in epithelial cells, from the subapical compartment in hepatic epithelial cells. In Homo sapiens (Human), this protein is Plasmolipin.